The sequence spans 913 residues: Cadherin-4 (913 aa).

The signal sequence occupies residues 1–20 (MTTGSVLPLLLLGLSGALRA). Positions 21 to 166 (HREDLTVREA…SSGGLRRQKR (146 aa)) are excised as a propeptide. Residue Asn146 is glycosylated (N-linked (GlcNAc...) asparagine). Cadherin domains lie at 167–274 (DWVI…RPEF), 275–389 (INQV…PPEF), 390–504 (TTST…APYF), 505–610 (PSNH…DNAP), and 611–721 (QLLP…TVGA). Topologically, residues 167–731 (DWVIPPINVP…VAAAGLGTGA (565 aa)) are extracellular. Asn280, Asn409, Asn554, Asn629, Asn658, and Asn699 each carry an N-linked (GlcNAc...) asparagine glycan. Residues 732 to 753 (IVAILICIVILLIMVLLFVVWM) traverse the membrane as a helical segment. Over 754–913 (KRREKERHTK…ADMYGGGEED (160 aa)) the chain is Cytoplasmic.

Distributed widely in mouse tissues with high levels present in brain, skeletal muscle and thymus.

It localises to the cell membrane. Cadherins are calcium-dependent cell adhesion proteins. They preferentially interact with themselves in a homophilic manner in connecting cells; cadherins may thus contribute to the sorting of heterogeneous cell types. May play an important role in retinal development. The sequence is that of Cadherin-4 (Cdh4) from Mus musculus (Mouse).